The chain runs to 147 residues: Monothiol glutaredoxin-S5 (147 aa).

Residues 49 to 146 form the Glutaredoxin domain; that stretch reads AAEVRRAVAE…PILKKAGALW (98 aa). Cys-69 is a [2Fe-2S] cluster binding site. A Responsive for interaction with TGA factors motif is present at residues 144–147; that stretch reads ALWL.

The protein belongs to the glutaredoxin family. CC-type subfamily.

The protein localises to the cytoplasm. It is found in the nucleus. Its function is as follows. May only reduce GSH-thiol disulfides, but not protein disulfides. The chain is Monothiol glutaredoxin-S5 (GRXS5) from Oryza sativa subsp. japonica (Rice).